The following is a 23-amino-acid chain: SV40 early leader protein (23 aa).

Residues 1–23 (MQRPRPPRPLSYSRSSEEAFLEA) form a disordered region.

Belongs to the polyomavirus early leader protein family.

May play a role in the lytic cycle. The protein is SV40 early leader protein of Macaca (macaques).